A 127-amino-acid chain; its full sequence is Multifunctional methyltransferase subunit trm112 (127 aa).

Positions lysine 2–proline 123 constitute a TRM112 domain.

The protein belongs to the TRM112 family. As to quaternary structure, heterodimer of mtq2-rmt-1/trm112, forming the eRF1 methyltransferase. Rmt-1/trm112 is necessary for the solubility and activity of the catalytic subunit mtq2. Interacts with trm11; required for full tRNA methyltransferase activity. Interacts with bud23; required for full rRNA methyltransferase activity.

It localises to the cytoplasm. Its subcellular location is the nucleus. Functionally, acts as an activator of both rRNA/tRNA and protein methyltransferases. Together with methyltransferase mtq2, required for the methylation of eRF1 on 'Gln-182'. Together with methyltransferase trm11, required for the formation of 2-methylguanosine at position 10 (m2G10) in tRNA. Together with methyltransferase bud23, required for the formation of a 7-methylguanine in 18S rRNA. Involved in biogenesis of both 40S and 60S ribosomal subunits. The protein is Multifunctional methyltransferase subunit trm112 (rmt-1) of Neurospora crassa (strain ATCC 24698 / 74-OR23-1A / CBS 708.71 / DSM 1257 / FGSC 987).